Consider the following 419-residue polypeptide: MGPLSAPPCTQRITWKGVLLTASLLNFWNPPTTAQVTIEAQPPKVSEGKDVLLLVHNLPQNLAGYIWYKGQMTYLYHYITSYVVDGQRIIYGPAYSGRERVYSNASLLIQNVTQEDAGSYTLHIIKRRDGTGGVTGHFTFTLHLETPKPSISSSNLNPREAMEAVILTCDPATPAASYQWWMNGQSLPMTHRLQLSKTNRTLFIFGVTKYIAGPYECEIRNPVSASRSDPVTLNLLPKLSKPYITINNLNPRENKDVLTFTCEPKSKNYTYIWWLNGQSLPVSPRVKRPIENRILILPNVTRNETGPYQCEIRDRYGGIRSDPVTLNVLYGPDLPSIYPSFTYYRSGENLYLSCFAESNPRAQYSWTINGKFQLSGQKLSIPQITTKHSGLYACSVRNSATGKESSKSITVKVSDWILP.

An N-terminal signal peptide occupies residues 1–34 (MGPLSAPPCTQRITWKGVLLTASLLNFWNPPTTA). The Ig-like V-type domain maps to 35–144 (QVTIEAQPPK…TGHFTFTLHL (110 aa)). N-linked (GlcNAc...) asparagine glycosylation is found at Asn104, Asn111, Asn199, Asn268, Asn299, and Asn303. Ig-like C2-type domains lie at 147–234 (PKPS…VTLN), 237–327 (PKLS…VTLN), and 332–410 (PDLP…KSIT). 3 cysteine pairs are disulfide-bonded: Cys169/Cys217, Cys262/Cys310, and Cys354/Cys394.

The protein belongs to the immunoglobulin superfamily. CEA family.

The protein resides in the secreted. The chain is Pregnancy-specific beta-1-glycoprotein 4 (PSG4) from Homo sapiens (Human).